Consider the following 258-residue polypeptide: tRNA pseudouridine synthase A (258 aa).

D52 serves as the catalytic Nucleophile. Y110 lines the substrate pocket.

It belongs to the tRNA pseudouridine synthase TruA family. In terms of assembly, homodimer.

The enzyme catalyses uridine(38/39/40) in tRNA = pseudouridine(38/39/40) in tRNA. Its function is as follows. Formation of pseudouridine at positions 38, 39 and 40 in the anticodon stem and loop of transfer RNAs. The sequence is that of tRNA pseudouridine synthase A from Francisella tularensis subsp. holarctica (strain FTNF002-00 / FTA).